Here is a 205-residue protein sequence, read N- to C-terminus: Thymidylate kinase (205 aa).

Position 9–16 (9–16 (GPEGSGKT)) interacts with ATP.

It belongs to the thymidylate kinase family.

It carries out the reaction dTMP + ATP = dTDP + ADP. In terms of biological role, phosphorylation of dTMP to form dTDP in both de novo and salvage pathways of dTTP synthesis. The protein is Thymidylate kinase of Staphylococcus aureus (strain NCTC 8325 / PS 47).